A 227-amino-acid polypeptide reads, in one-letter code: Class I hydrophobin A (227 aa).

An N-terminal signal peptide occupies residues 1 to 18 (MQFSLSAIVLGLAATVYA). N50 carries an N-linked (GlcNAc...) asparagine glycan. 3 disulfide bridges follow: C60/C138, C68/C132, and C69/C109.

The protein belongs to the fungal hydrophobin family.

Its subcellular location is the secreted. The protein localises to the cell wall. Its function is as follows. Aerial growth, conidiation, and dispersal of filamentous fungi in the environment rely upon a capability of their secreting small amphipathic proteins called hydrophobins (HPBs) with low sequence identity. Class I can self-assemble into an outermost layer of rodlet bundles on aerial cell surfaces, conferring cellular hydrophobicity that supports fungal growth, development and dispersal; whereas Class II form highly ordered films at water-air interfaces through intermolecular interactions but contribute nothing to the rodlet structure. In P.expansum, hydrophobins contribute to germination, tolerance to cold stress and mycotoxins patulin and citrinin production. HfbA and HfbB are essential for fungal surface hydrophobicity and HfbA mediates air and water dispersal. This Penicillium expansum (Blue mold rot fungus) protein is Class I hydrophobin A.